A 353-amino-acid polypeptide reads, in one-letter code: Cellulose-complementing protein (353 aa).

3 disordered regions span residues 1–21 (MSASGSDEVAGGGQAGSPQDF), 75–94 (PQIAVAPPPPPVVPDPPAIV), and 117–337 (AVPA…SPRP). Positions 80 to 91 (APPPPPVVPDPP) are enriched in pro residues. 2 stretches are compositionally biased toward low complexity: residues 117-132 (AVPAEPPVQEAPVQAA) and 142-164 (IAEQAPPAAPDPASVPYANVAAA). The segment covering 165–175 (PVPPDPAPVTP) has biased composition (pro residues). 2 stretches are compositionally biased toward polar residues: residues 196 to 226 (QVRTVQEGATPSRVPSRSMNAFPRTSASSIS) and 278 to 304 (STRSVRSNVSRMTSMTKTDTNSSQASR).

The protein is Cellulose-complementing protein (ccpAX) of Komagataeibacter xylinus (Gluconacetobacter xylinus).